Reading from the N-terminus, the 591-residue chain is Probable auxin efflux carrier component 3b (591 aa).

The Extracellular segment spans residues 1 to 6 (MISWHE). The helical transmembrane segment at 7–27 (LYMVLSAVVPLYVAMMVAYGS) threads the bilayer. Over 28 to 38 (VRWWGVLTPEQ) the chain is Cytoplasmic. Residues 39 to 59 (CSGINRFVAVIAVPLLSFHFI) traverse the membrane as a helical segment. Position 51 (Val-51) interacts with (indol-3-yl)acetate. The Extracellular portion of the chain corresponds to 60 to 70 (SSSDPYAMNLR). A helical membrane pass occupies residues 71 to 93 (FVAADTLQKVLVLAALAAWSRFP). The Cytoplasmic portion of the chain corresponds to 94–107 (ARFVPPAWPPLDCS). Residues 108-128 (ITLFSVSTLPNTLVMGIPLLV) form a helical membrane-spanning segment. (indol-3-yl)acetate-binding residues include Asn-118 and Leu-120. At 129-137 (SMYGPYSGD) the chain is on the extracellular side. A helical transmembrane segment spans residues 138 to 158 (LMVQIVVLQSIVWYTLLLFLF). Tyr-151 lines the (indol-3-yl)acetate pocket. Residues 159 to 450 (EFRAARVLIA…LIRNPNTYAS (292 aa)) lie on the Cytoplasmic side of the membrane. Composition is skewed to polar residues over residues 243-254 (SRNATPRGSTFT) and 283-292 (SSSRQHTPRP). Disordered regions lie at residues 243–269 (SRNA…SALR), 283–313 (SSSR…APTN), 344–374 (ETRR…GERA), and 392–420 (AGAK…RARG). Residues 395–407 (KTEQQTTAVTTTT) are compositionally biased toward low complexity. Residues 451–471 (LIGLTWSLIAFRFHITMPIIV) traverse the membrane as a helical segment. Residues 472–474 (AKS) are Extracellular-facing. A helical membrane pass occupies residues 475–495 (ISILSDAGLGMAMFSLGLFMA). At 496–511 (TQPKIIACGYSVAAAS) the chain is on the cytoplasmic side. Residues 512–532 (MGVRFFFGPAIMAAASAAVGI) traverse the membrane as a helical segment. At 533–535 (RGT) the chain is on the extracellular side. The helical transmembrane segment at 536 to 556 (LLRIAIVQAALPQGIVPFVFA) threads the bilayer. Residues Ile-550 and Val-551 each coordinate (indol-3-yl)acetate. Residues 557–568 (KEYNLHATILCT) are Cytoplasmic-facing. The helical transmembrane segment at 569–589 (LVIFGMLIALPITLVYYIILG) threads the bilayer. The Extracellular segment spans residues 590-591 (LL).

Belongs to the auxin efflux carrier (TC 2.A.69.1) family. Homodimer. In terms of tissue distribution, expressed in stem bases and leaves.

It localises to the membrane. Functionally, may act as a component of the auxin efflux carrier. The polypeptide is Probable auxin efflux carrier component 3b (Oryza sativa subsp. japonica (Rice)).